The primary structure comprises 316 residues: Nod factor export ATP-binding protein I (316 aa).

Positions 18–248 constitute an ABC transporter domain; the sequence is IDFSDVSKTY…LIGCEVIEIY (231 aa). 50-57 is a binding site for ATP; sequence GPNGAGKS.

Belongs to the ABC transporter superfamily. Lipooligosaccharide exporter (TC 3.A.1.102) family. The complex is composed of two ATP-binding proteins (NodI) and two transmembrane proteins (NodJ).

The protein localises to the cell inner membrane. Its function is as follows. Part of the ABC transporter complex NodIJ involved in the export of the nodulation factors (Nod factors), the bacterial signal molecules that induce symbiosis and subsequent nodulation induction. Nod factors are LCO (lipo-chitin oligosaccharide), a modified beta-1,4-linked N-acetylglucosamine oligosaccharide. This subunit is responsible for energy coupling to the transport system. The protein is Nod factor export ATP-binding protein I of Rhizobium etli (strain ATCC 51251 / DSM 11541 / JCM 21823 / NBRC 15573 / CFN 42).